The following is a 563-amino-acid chain: CTP synthase (563 aa).

Positions 1-278 (MAKATAKNSA…DLRVLEQLHL (278 aa)) are amidoligase domain. S24 lines the CTP pocket. S24 contacts UTP. 25–30 (SLGKGI) contacts ATP. Y65 is a binding site for L-glutamine. D82 lines the ATP pocket. Mg(2+)-binding residues include D82 and E151. Residues 158-160 (DIE), 198-203 (KTKPSQ), and K234 each bind CTP. Residues 198–203 (KTKPSQ) and K234 contribute to the UTP site. Position 250–252 (250–252 (KDV)) interacts with ATP. Residues 303 to 545 (TIALVGKYIA…VKAALEQKKA (243 aa)) enclose the Glutamine amidotransferase type-1 domain. G363 contacts L-glutamine. C390 acts as the Nucleophile; for glutamine hydrolysis in catalysis. L-glutamine contacts are provided by residues 391–394 (LGMQ), E414, and R471. Active-site residues include H518 and E520. Residues 542-563 (QKKANGKKPTAPSEKTKKTKTK) form a disordered region.

It belongs to the CTP synthase family. Homotetramer.

The catalysed reaction is UTP + L-glutamine + ATP + H2O = CTP + L-glutamate + ADP + phosphate + 2 H(+). It catalyses the reaction L-glutamine + H2O = L-glutamate + NH4(+). It carries out the reaction UTP + NH4(+) + ATP = CTP + ADP + phosphate + 2 H(+). Its pathway is pyrimidine metabolism; CTP biosynthesis via de novo pathway; CTP from UDP: step 2/2. Allosterically activated by GTP, when glutamine is the substrate; GTP has no effect on the reaction when ammonia is the substrate. The allosteric effector GTP functions by stabilizing the protein conformation that binds the tetrahedral intermediate(s) formed during glutamine hydrolysis. Inhibited by the product CTP, via allosteric rather than competitive inhibition. Functionally, catalyzes the ATP-dependent amination of UTP to CTP with either L-glutamine or ammonia as the source of nitrogen. Regulates intracellular CTP levels through interactions with the four ribonucleotide triphosphates. The sequence is that of CTP synthase from Fibrobacter succinogenes (strain ATCC 19169 / S85).